A 160-amino-acid chain; its full sequence is Eosinophil cationic protein (160 aa).

The first 27 residues, Met1–Ala27, serve as a signal peptide directing secretion. The segment at Arg28–Arg72 is required for nearly all of the bactericidal activities; partially involved in LPS-binding. His42 serves as the catalytic Proton acceptor. Cystine bridges form between Cys50–Cys110, Cys64–Cys123, Cys82–Cys138, and Cys89–Cys98. Residue Tyr60 is modified to 3'-nitrotyrosine. Lys65 to Thr69 serves as a coordination point for substrate. N-linked (GlcNAc...) asparagine glycosylation is found at Asn92 and Asn119. His155 (proton donor) is an active-site residue.

Belongs to the pancreatic ribonuclease family. In terms of assembly, interacts with bacterial lipopolysaccharide (LPS) and lipoteichoic acid (LTA). In vitro interacts with phospholipid bilayers.

It is found in the secreted. In terms of biological role, cytotoxin and helminthotoxin with low-efficiency ribonuclease activity. Possesses a wide variety of biological activities. Exhibits antibacterial activity. This is Eosinophil cationic protein (RNASE3) from Macaca fascicularis (Crab-eating macaque).